A 344-amino-acid chain; its full sequence is Biotin synthase (344 aa).

Residues 40-267 (AQVQVSTLLS…KSMVRLSAGR (228 aa)) form the Radical SAM core domain. The [4Fe-4S] cluster site is built by Cys55, Cys59, and Cys62. Cys99, Cys130, Cys190, and Arg262 together coordinate [2Fe-2S] cluster.

The protein belongs to the radical SAM superfamily. Biotin synthase family. As to quaternary structure, homodimer. [4Fe-4S] cluster serves as cofactor. The cofactor is [2Fe-2S] cluster.

It catalyses the reaction (4R,5S)-dethiobiotin + (sulfur carrier)-SH + 2 reduced [2Fe-2S]-[ferredoxin] + 2 S-adenosyl-L-methionine = (sulfur carrier)-H + biotin + 2 5'-deoxyadenosine + 2 L-methionine + 2 oxidized [2Fe-2S]-[ferredoxin]. Its pathway is cofactor biosynthesis; biotin biosynthesis; biotin from 7,8-diaminononanoate: step 2/2. Catalyzes the conversion of dethiobiotin (DTB) to biotin by the insertion of a sulfur atom into dethiobiotin via a radical-based mechanism. The polypeptide is Biotin synthase (Xanthomonas axonopodis pv. citri (strain 306)).